The chain runs to 554 residues: Beta-eudesmol synthase (554 aa).

Asp305, Asp309, and Glu456 together coordinate Mg(2+). Positions 305–309 (DDIYD) match the DDXXD motif motif.

The protein belongs to the terpene synthase family. Requires Mg(2+) as cofactor. The cofactor is Mn(2+). In terms of tissue distribution, expressed in rhizomes. Detected in stems, but not in leaves.

It localises to the cytoplasm. It carries out the reaction (2E,6E)-farnesyl diphosphate + H2O = beta-eudesmol + diphosphate. It catalyses the reaction (2E,6E)-farnesyl diphosphate + H2O = 10-epi-gamma-eudesmol + diphosphate. The enzyme catalyses (2E,6E)-farnesyl diphosphate + H2O = alpha-eudesmol + diphosphate. It functions in the pathway secondary metabolite biosynthesis; terpenoid biosynthesis. In terms of biological role, involved in the biosynthesis of beta-eudesmol, a sesquiterpene with antifungal activity and responsible for resistance of plants to ant attack. Produces mainly beta-eudesmol, but also smaller amounts of 10-epi-gamma-eudesmol, alpha-eudesmol and aristolene. This chain is Beta-eudesmol synthase (ZSS2), found in Zingiber zerumbet (Shampoo ginger).